A 346-amino-acid chain; its full sequence is Peripherin-2 (346 aa).

At 1 to 24 (MALLKVKFDQKKRVKLAQGLWLMN) the chain is on the cytoplasmic side. Residues 25-43 (WLSVLAGIVLFSLGLFLKI) form a helical membrane-spanning segment. Over 44–61 (ELRKRSEVMNNSESHFVP) the chain is Lumenal. Asparagine 53 is a glycosylation site (N-linked (GlcNAc...) asparagine). Residues 62–80 (NSLIGVGVLSCVFNSLAGK) traverse the membrane as a helical segment. The Cytoplasmic portion of the chain corresponds to 81 to 99 (ICYDALDPAKYAKWKPWLK). Residues 100–123 (PYLAVCIFFNVILFLVALCCFLLR) form a helical membrane-spanning segment. The Lumenal portion of the chain corresponds to 124-264 (GSLESTLAYG…LNYYSSLMNS (141 aa)). Asparagine 229 is a glycosylation site (N-linked (GlcNAc...) asparagine). Residues 265 to 290 (MGVVTLLVWLFEVSITAGLRYLHTAL) traverse the membrane as a helical segment. The Cytoplasmic portion of the chain corresponds to 291-346 (ESVSNPEDPECESEGWLLEKSVPETWKAFLESFKKLGKSNQVEAEGADAGPAPEAG). The interval 341-346 (PAPEAG) is interaction with MREG.

This sequence belongs to the PRPH2/ROM1 family. As to quaternary structure, homodimer; disulfide-linked. Forms a homotetramer. Forms a heterotetramer with ROM1. Homotetramer and heterotetramer core complexes go on to form higher order complexes by formation of intermolecular disulfide bonds. Interacts with MREG. Interacts with STX3 isoform 3B. Interacts with SNAP25. As to expression, expressed in the retina (at protein level).

The protein localises to the membrane. It is found in the cell projection. It localises to the cilium. The protein resides in the photoreceptor outer segment. Its subcellular location is the photoreceptor inner segment. Functionally, essential for retina photoreceptor outer segment disk morphogenesis, may also play a role with ROM1 in the maintenance of outer segment disk structure. Required for the maintenance of retinal outer nuclear layer thickness. Required for the correct development and organization of the photoreceptor inner segment. The protein is Peripherin-2 (Prph2) of Mus musculus (Mouse).